The following is a 105-amino-acid chain: Nitrogenase-stabilizing/protective protein NifW (105 aa).

The protein belongs to the NifW family. As to quaternary structure, homotrimer; associates with NifD.

In terms of biological role, may protect the nitrogenase Fe-Mo protein from oxidative damage. This is Nitrogenase-stabilizing/protective protein NifW from Nostoc punctiforme (strain ATCC 29133 / PCC 73102).